Reading from the N-terminus, the 101-residue chain is NADH-ubiquinone oxidoreductase chain 4L (101 aa).

3 helical membrane passes run 5–25, 29–49, and 64–84; these read LNCTNISSLLFLVSLLGIFLN, ILVMLMSLEMMFLSISFNLIF, and LLILTVAAAESSIGLAILVIY.

The protein belongs to the complex I subunit 4L family.

The protein resides in the mitochondrion membrane. The catalysed reaction is a ubiquinone + NADH + 5 H(+)(in) = a ubiquinol + NAD(+) + 4 H(+)(out). Core subunit of the mitochondrial membrane respiratory chain NADH dehydrogenase (Complex I) that is believed to belong to the minimal assembly required for catalysis. Complex I functions in the transfer of electrons from NADH to the respiratory chain. The immediate electron acceptor for the enzyme is believed to be ubiquinone. This is NADH-ubiquinone oxidoreductase chain 4L (ND4L) from Chondrus crispus (Carrageen Irish moss).